A 217-amino-acid chain; its full sequence is Ribosomal RNA small subunit methyltransferase G (217 aa).

S-adenosyl-L-methionine contacts are provided by residues G74, L79, 125–126 (IQ), and R143.

The protein belongs to the methyltransferase superfamily. RNA methyltransferase RsmG family.

It is found in the cytoplasm. The enzyme catalyses guanosine(527) in 16S rRNA + S-adenosyl-L-methionine = N(7)-methylguanosine(527) in 16S rRNA + S-adenosyl-L-homocysteine. Its function is as follows. Specifically methylates the N7 position of guanine in position 527 of 16S rRNA. This is Ribosomal RNA small subunit methyltransferase G from Syntrophotalea carbinolica (strain DSM 2380 / NBRC 103641 / GraBd1) (Pelobacter carbinolicus).